The sequence spans 212 residues: Uridine kinase (212 aa).

13–20 (GASASGKS) contributes to the ATP binding site.

Belongs to the uridine kinase family.

It localises to the cytoplasm. The enzyme catalyses uridine + ATP = UMP + ADP + H(+). It carries out the reaction cytidine + ATP = CMP + ADP + H(+). It participates in pyrimidine metabolism; CTP biosynthesis via salvage pathway; CTP from cytidine: step 1/3. It functions in the pathway pyrimidine metabolism; UMP biosynthesis via salvage pathway; UMP from uridine: step 1/1. The chain is Uridine kinase from Shewanella halifaxensis (strain HAW-EB4).